Consider the following 297-residue polypeptide: 1D-myo-inositol 2-acetamido-2-deoxy-alpha-D-glucopyranoside deacetylase (297 aa).

Histidine 14, aspartate 17, and histidine 149 together coordinate Zn(2+).

This sequence belongs to the MshB deacetylase family. It depends on Zn(2+) as a cofactor.

It carries out the reaction 1D-myo-inositol 2-acetamido-2-deoxy-alpha-D-glucopyranoside + H2O = 1D-myo-inositol 2-amino-2-deoxy-alpha-D-glucopyranoside + acetate. Functionally, catalyzes the deacetylation of 1D-myo-inositol 2-acetamido-2-deoxy-alpha-D-glucopyranoside (GlcNAc-Ins) in the mycothiol biosynthesis pathway. The polypeptide is 1D-myo-inositol 2-acetamido-2-deoxy-alpha-D-glucopyranoside deacetylase (Thermomonospora curvata (strain ATCC 19995 / DSM 43183 / JCM 3096 / KCTC 9072 / NBRC 15933 / NCIMB 10081 / Henssen B9)).